The following is a 167-amino-acid chain: NAD(P)H-quinone oxidoreductase subunit I, chloroplastic (167 aa).

2 consecutive 4Fe-4S ferredoxin-type domains span residues Gly55–Lys84 and Leu95–Glu124. Residues Cys64, Cys67, Cys70, Cys74, Cys104, Cys107, Cys110, and Cys114 each contribute to the [4Fe-4S] cluster site.

Belongs to the complex I 23 kDa subunit family. As to quaternary structure, NDH is composed of at least 16 different subunits, 5 of which are encoded in the nucleus. [4Fe-4S] cluster is required as a cofactor.

The protein resides in the plastid. The protein localises to the chloroplast thylakoid membrane. The enzyme catalyses a plastoquinone + NADH + (n+1) H(+)(in) = a plastoquinol + NAD(+) + n H(+)(out). The catalysed reaction is a plastoquinone + NADPH + (n+1) H(+)(in) = a plastoquinol + NADP(+) + n H(+)(out). Its function is as follows. NDH shuttles electrons from NAD(P)H:plastoquinone, via FMN and iron-sulfur (Fe-S) centers, to quinones in the photosynthetic chain and possibly in a chloroplast respiratory chain. The immediate electron acceptor for the enzyme in this species is believed to be plastoquinone. Couples the redox reaction to proton translocation, and thus conserves the redox energy in a proton gradient. This is NAD(P)H-quinone oxidoreductase subunit I, chloroplastic from Draba nemorosa (Woodland whitlowgrass).